The chain runs to 178 residues: Dual-action ribosomal maturation protein DarP (178 aa).

Positions 1–14 (MTVSDHPQTVSQPD) are enriched in polar residues. Residues 1–25 (MTVSDHPQTVSQPDPESESRPSKTR) form a disordered region.

The protein belongs to the DarP family.

It localises to the cytoplasm. In terms of biological role, member of a network of 50S ribosomal subunit biogenesis factors which assembles along the 30S-50S interface, preventing incorrect 23S rRNA structures from forming. Promotes peptidyl transferase center (PTC) maturation. This Nitrosomonas europaea (strain ATCC 19718 / CIP 103999 / KCTC 2705 / NBRC 14298) protein is Dual-action ribosomal maturation protein DarP.